The primary structure comprises 304 residues: UDP-3-O-acyl-N-acetylglucosamine deacetylase (304 aa).

3 residues coordinate Zn(2+): histidine 78, histidine 237, and aspartate 241. Catalysis depends on histidine 264, which acts as the Proton donor.

This sequence belongs to the LpxC family. Requires Zn(2+) as cofactor.

It catalyses the reaction a UDP-3-O-[(3R)-3-hydroxyacyl]-N-acetyl-alpha-D-glucosamine + H2O = a UDP-3-O-[(3R)-3-hydroxyacyl]-alpha-D-glucosamine + acetate. Its pathway is glycolipid biosynthesis; lipid IV(A) biosynthesis; lipid IV(A) from (3R)-3-hydroxytetradecanoyl-[acyl-carrier-protein] and UDP-N-acetyl-alpha-D-glucosamine: step 2/6. Its function is as follows. Catalyzes the hydrolysis of UDP-3-O-myristoyl-N-acetylglucosamine to form UDP-3-O-myristoylglucosamine and acetate, the committed step in lipid A biosynthesis. This is UDP-3-O-acyl-N-acetylglucosamine deacetylase from Legionella pneumophila (strain Paris).